We begin with the raw amino-acid sequence, 257 residues long: NAD kinase (257 aa).

The active-site Proton acceptor is D44. NAD(+)-binding positions include 44-45 (DG), R49, 116-117 (NE), D146, A154, and 157-162 (TAYNLS).

Belongs to the NAD kinase family. A divalent metal cation is required as a cofactor.

The protein localises to the cytoplasm. It carries out the reaction NAD(+) + ATP = ADP + NADP(+) + H(+). Functionally, involved in the regulation of the intracellular balance of NAD and NADP, and is a key enzyme in the biosynthesis of NADP. Catalyzes specifically the phosphorylation on 2'-hydroxyl of the adenosine moiety of NAD to yield NADP. The sequence is that of NAD kinase from Rhizorhabdus wittichii (strain DSM 6014 / CCUG 31198 / JCM 15750 / NBRC 105917 / EY 4224 / RW1) (Sphingomonas wittichii).